A 1042-amino-acid polypeptide reads, in one-letter code: Disintegrin and metalloproteinase domain-containing protein unc-71 (1042 aa).

The signal sequence occupies residues 1–23 (MICASKITMLGLLVMCTLGGVLG). Residues 24–746 (KVDIRQTTAN…NIGTTLETAT (723 aa)) are Extracellular-facing. Asn103 and Asn155 each carry an N-linked (GlcNAc...) asparagine glycan. Residues 227–431 (KYVEVALIAD…GNIQCLLNKP (205 aa)) form the Peptidase M12B domain. Disulfide bonds link Cys338–Cys426, Cys378–Cys410, Cys380–Cys386, and Cys496–Cys516. The Disintegrin domain occupies 437–524 (LRECGNGVVD…DCPPDGHLID (88 aa)). Asn538 is a glycosylation site (N-linked (GlcNAc...) asparagine). The EGF-like domain occupies 662–699 (SATACPTNNLALLCSGHGHCTTTARCVCFNGWSGVACD). 3 cysteine pairs are disulfide-bonded: Cys666–Cys681, Cys675–Cys687, and Cys689–Cys698. Asn703 carries N-linked (GlcNAc...) asparagine glycosylation. The chain crosses the membrane as a helical span at residues 747 to 767 (LFAILLGFGVFLLLCLVCLML). Over 768–1042 (CYRRRSVVEI…KLEMTNSMHN (275 aa)) the chain is Cytoplasmic. 3 disordered regions span residues 779–809 (KPSDEKDEESPDRQIKFGNMPSYREEKRKRK), 825–850 (DERDSTSLRSRDSAGGSQQLVDRRNG), and 980–1028 (HDVG…PSLF). Over residues 825 to 836 (DERDSTSLRSRD) the composition is skewed to basic and acidic residues. Positions 1002–1027 (DSPTLVNGASSSSTSNNYNFRQSPSL) are enriched in polar residues.

The protein resides in the cell membrane. In terms of biological role, involved in the migration of sex myoblasts (progenitors of egg-laying muscles), Q neuroblasts and BDU interneurons during development. Involved in axon branching and guidance of neurons including GABAergic type D motor neurons. Promotes sex myoblast migration and positioning independently of gonad attraction cues. May act downstream of mig-13 in order to promote the guidance, migration and positioning of Q neuroblasts and their descendants along the anteroposterior body axis. Required for coordinated movements. This chain is Disintegrin and metalloproteinase domain-containing protein unc-71, found in Caenorhabditis elegans.